The primary structure comprises 306 residues: Probable cobalamin biosynthesis protein CobD (306 aa).

6 consecutive transmembrane segments (helical) span residues 17-37, 54-74, 88-108, 155-175, 207-227, and 286-306; these read IGEPPEKVHPVIFIGKLIIFF, LFGFFNVILVLAIVFFMAYEI, ISLYSIILSFSIGHKSLIEFS, ITDSIIAPLIYVAIFGLPGAF, ILNFIPSRIAGMLLIITAPFY, and SLKAVDYSVLLFLIIYTVLLM.

It belongs to the CobD/CbiB family.

It localises to the cell membrane. It participates in cofactor biosynthesis; adenosylcobalamin biosynthesis. Functionally, converts cobyric acid to cobinamide by the addition of aminopropanol on the F carboxylic group. The protein is Probable cobalamin biosynthesis protein CobD of Methanococcus maripaludis (strain C5 / ATCC BAA-1333).